A 607-amino-acid chain; its full sequence is Karyogamy meiotic segregation protein 1 (607 aa).

Residues 83–135 form a disordered region; the sequence is DDSFANQAEKPSMEQQNSKNSIKEDANEHSVNSAHSKSSSNASPESLNPSQMM. Positions 111-132 are enriched in low complexity; sequence HSVNSAHSKSSSNASPESLNPS.

In terms of assembly, interacts with mcp1 and sad1.

The protein localises to the cytoplasm. The protein resides in the cytoskeleton. It localises to the microtubule organizing center. Its subcellular location is the spindle pole body. Its function is as follows. Has a role in karyogamy, recombination and segregation during meiosis. Although it has been shown to associate with the spindle pole body it is unlikely to be involved in its formation or maintenance. In Schizosaccharomyces pombe (strain 972 / ATCC 24843) (Fission yeast), this protein is Karyogamy meiotic segregation protein 1 (kms1).